Here is a 366-residue protein sequence, read N- to C-terminus: Lipase member J (366 aa).

Residue serine 141 is the Nucleophile of the active site. Active-site charge relay system residues include aspartate 312 and histidine 341.

This sequence belongs to the AB hydrolase superfamily. Lipase family.

In Homo sapiens (Human), this protein is Lipase member J (LIPJ).